The chain runs to 911 residues: DNA ligase 4 (911 aa).

ATP-binding residues include glutamate 271, threonine 272, lysine 273, leucine 274, arginine 278, glutamate 331, lysine 345, phenylalanine 367, glutamate 427, lysine 432, lysine 449, and lysine 451. Lysine 273 acts as the N6-AMP-lysine intermediate in catalysis. Glutamate 331 serves as a coordination point for Mg(2+). Position 427 (glutamate 427) interacts with Mg(2+). The tract at residues 610 to 620 is required for catalytic activity; it reads LASKHLYIGGD. BRCT domains lie at 654-743 and 808-911; these read KISN…PRFM and SPLS…QYLI.

Belongs to the ATP-dependent DNA ligase family. As to quaternary structure, interacts with XRCC4; the LIG4-XRCC4 subcomplex has a 1:2 stoichiometry and XRCC4 is required for LIG4 stability. Component of the core long-range non-homologous end joining (NHEJ) complex (also named DNA-PK complex) composed of PRKDC, LIG4, XRCC4, XRCC6/Ku70, XRCC5/Ku86 and NHEJ1/XLF. Additional component of the NHEJ complex includes PAXX. Following autophosphorylation, PRKDC dissociates from DNA, leading to formation of the short-range NHEJ complex, composed of LIG4, XRCC4, XRCC6/Ku70, XRCC5/Ku86 and NHEJ1/XLF. Interacts with DCLRE1C; the interaction is direct. Interacts with APLF. It depends on Mg(2+) as a cofactor. As to expression, testis, thymus, prostate and heart.

It is found in the nucleus. It catalyses the reaction ATP + (deoxyribonucleotide)n-3'-hydroxyl + 5'-phospho-(deoxyribonucleotide)m = (deoxyribonucleotide)n+m + AMP + diphosphate.. Its function is as follows. DNA ligase involved in DNA non-homologous end joining (NHEJ); required for double-strand break (DSB) repair and V(D)J recombination. Catalyzes the NHEJ ligation step of the broken DNA during DSB repair by resealing the DNA breaks after the gap filling is completed. Joins single-strand breaks in a double-stranded polydeoxynucleotide in an ATP-dependent reaction. LIG4 is mechanistically flexible: it can ligate nicks as well as compatible DNA overhangs alone, while in the presence of XRCC4, it can ligate ends with 2-nucleotides (nt) microhomology and 1-nt gaps. Forms a subcomplex with XRCC4; the LIG4-XRCC4 subcomplex is responsible for the NHEJ ligation step and XRCC4 enhances the joining activity of LIG4. Binding of the LIG4-XRCC4 complex to DNA ends is dependent on the assembly of the DNA-dependent protein kinase complex DNA-PK to these DNA ends. LIG4 regulates nuclear localization of XRCC4. The polypeptide is DNA ligase 4 (Homo sapiens (Human)).